The chain runs to 404 residues: Argininosuccinate synthase (404 aa).

Residues 10 to 18 (AYSGGLDTS) and Ala37 contribute to the ATP site. L-citrulline-binding residues include Tyr90 and Ser95. Residue Gly120 participates in ATP binding. Residues Thr122, Asn126, and Asp127 each coordinate L-aspartate. Residue Asn126 participates in L-citrulline binding. Residues Arg130, Ser181, Ser190, Glu266, and Tyr278 each contribute to the L-citrulline site. The segment at 173 to 200 (DKRGESPFSTDANLLHTSSEGKVLEDPW) is disordered. The segment covering 179–192 (PFSTDANLLHTSSE) has biased composition (polar residues).

Belongs to the argininosuccinate synthase family. Type 1 subfamily. In terms of assembly, homotetramer.

It is found in the cytoplasm. It catalyses the reaction L-citrulline + L-aspartate + ATP = 2-(N(omega)-L-arginino)succinate + AMP + diphosphate + H(+). It participates in amino-acid biosynthesis; L-arginine biosynthesis; L-arginine from L-ornithine and carbamoyl phosphate: step 2/3. The polypeptide is Argininosuccinate synthase (Novosphingobium aromaticivorans (strain ATCC 700278 / DSM 12444 / CCUG 56034 / CIP 105152 / NBRC 16084 / F199)).